The primary structure comprises 474 residues: tRNA (adenine(58)-N(1))-methyltransferase catalytic subunit trm61 (474 aa).

Positions 75-109 (DTGSRGRTQKMKRKADELDSSTQAEDKPSPQTPVA) are disordered. Residues 163 to 165 (SGS), Glu-197, Arg-202, 225 to 226 (DV), and Asp-250 each bind S-adenosyl-L-methionine. Disordered stretches follow at residues 356–390 (LFRA…VPVY) and 423–474 (DEKR…SQKE). Over residues 358–367 (RATQNQSDGD) the composition is skewed to polar residues. The segment covering 423 to 432 (DEKRCREKWP) has biased composition (basic and acidic residues). Residues 434-443 (NRVQEPQGPQ) show a composition bias toward polar residues. Basic and acidic residues predominate over residues 450 to 474 (KRESREKRDLQRKEQSQPETESQKE).

The protein belongs to the class I-like SAM-binding methyltransferase superfamily. TRM61 family. As to quaternary structure, heterotetramer; composed of two copies of TRM6 and two copies of TRM61.

Its subcellular location is the nucleus. The catalysed reaction is adenosine(58) in tRNA + S-adenosyl-L-methionine = N(1)-methyladenosine(58) in tRNA + S-adenosyl-L-homocysteine + H(+). Catalytic subunit of tRNA (adenine-N(1)-)-methyltransferase, which catalyzes the formation of N(1)-methyladenine at position 58 (m1A58) in initiator methionyl-tRNA. This is tRNA (adenine(58)-N(1))-methyltransferase catalytic subunit trm61 (trm61) from Aspergillus oryzae (strain ATCC 42149 / RIB 40) (Yellow koji mold).